We begin with the raw amino-acid sequence, 506 residues long: Vinckepain-1 (506 aa).

Residues 1–32 lie on the Cytoplasmic side of the membrane; that stretch reads MSDNIGQINFTIPGIQSLDENDTYLKINHKKT. Residues 1 to 262 constitute a propeptide, activation peptide; sequence MSDNIGQINF…LISVDNKSKD (262 aa). The helical; Signal-anchor for type II membrane protein transmembrane segment at 33–53 threads the bilayer; it reads IKICAYAITAIALFFIGGVFF. Residues 54 to 506 are Lumenal-facing; that stretch reads KNQAKINALD…VGSDVFFPIY (453 aa). N-linked (GlcNAc...) asparagine glycans are attached at residues asparagine 133 and asparagine 258. Cystine bridges form between cysteine 284–cysteine 326, cysteine 319–cysteine 359, cysteine 344–cysteine 364, and cysteine 413–cysteine 495. Cysteine 287 is an active-site residue. Asparagine 418 carries N-linked (GlcNAc...) asparagine glycosylation. Residues histidine 419 and asparagine 470 contribute to the active site.

Belongs to the peptidase C1 family.

The protein resides in the membrane. Its function is as follows. Cysteine protease. This chain is Vinckepain-1, found in Plasmodium vinckei.